The primary structure comprises 144 residues: Large ribosomal subunit protein uL15 (144 aa).

The disordered stretch occupies residues Met1–His58. Residues Ala8 to Gly20 are compositionally biased toward basic residues. Residues Ser40 to Gly49 show a composition bias toward low complexity.

The protein belongs to the universal ribosomal protein uL15 family. Part of the 50S ribosomal subunit.

Its function is as follows. Binds to the 23S rRNA. This Koribacter versatilis (strain Ellin345) protein is Large ribosomal subunit protein uL15.